Reading from the N-terminus, the 227-residue chain is 2,3-bisphosphoglycerate-dependent phosphoglycerate mutase (227 aa).

Substrate is bound by residues 7–14 (RHGQSEWN), 20–21 (TG), Arg59, 86–89 (ERHY), Lys97, 113–114 (RR), and 182–183 (GN). His8 serves as the catalytic Tele-phosphohistidine intermediate. The active-site Proton donor/acceptor is the Glu86.

This sequence belongs to the phosphoglycerate mutase family. BPG-dependent PGAM subfamily. Homodimer.

The catalysed reaction is (2R)-2-phosphoglycerate = (2R)-3-phosphoglycerate. Its pathway is carbohydrate degradation; glycolysis; pyruvate from D-glyceraldehyde 3-phosphate: step 3/5. Functionally, catalyzes the interconversion of 2-phosphoglycerate and 3-phosphoglycerate. This is 2,3-bisphosphoglycerate-dependent phosphoglycerate mutase from Neisseria gonorrhoeae (strain ATCC 700825 / FA 1090).